The primary structure comprises 308 residues: Protoheme IX farnesyltransferase 2 (308 aa).

Helical transmembrane passes span 20-40 (VTKP…FLLA), 47-67 (AVLM…GCAI), 92-114 (IPLK…LLAW), 118-137 (LAAL…LYSL), 144-164 (VYGT…GYCA), 174-194 (LILL…IAIF), 218-238 (LHIV…PLAG), 240-260 (TGVG…LMAL), and 275-295 (QVFG…ALDF).

This sequence belongs to the UbiA prenyltransferase family. Protoheme IX farnesyltransferase subfamily.

It localises to the cell inner membrane. It carries out the reaction heme b + (2E,6E)-farnesyl diphosphate + H2O = Fe(II)-heme o + diphosphate. It functions in the pathway porphyrin-containing compound metabolism; heme O biosynthesis; heme O from protoheme: step 1/1. Functionally, converts heme B (protoheme IX) to heme O by substitution of the vinyl group on carbon 2 of heme B porphyrin ring with a hydroxyethyl farnesyl side group. The protein is Protoheme IX farnesyltransferase 2 of Shewanella loihica (strain ATCC BAA-1088 / PV-4).